The primary structure comprises 578 residues: Isocitrate dehydrogenase kinase/phosphatase (578 aa).

ATP contacts are provided by residues 315 to 321 (APGIRGM) and lysine 336. The active site involves aspartate 371.

Belongs to the AceK family.

It localises to the cytoplasm. It catalyses the reaction L-seryl-[isocitrate dehydrogenase] + ATP = O-phospho-L-seryl-[isocitrate dehydrogenase] + ADP + H(+). Functionally, bifunctional enzyme which can phosphorylate or dephosphorylate isocitrate dehydrogenase (IDH) on a specific serine residue. This is a regulatory mechanism which enables bacteria to bypass the Krebs cycle via the glyoxylate shunt in response to the source of carbon. When bacteria are grown on glucose, IDH is fully active and unphosphorylated, but when grown on acetate or ethanol, the activity of IDH declines drastically concomitant with its phosphorylation. This chain is Isocitrate dehydrogenase kinase/phosphatase, found in Escherichia coli (strain ATCC 8739 / DSM 1576 / NBRC 3972 / NCIMB 8545 / WDCM 00012 / Crooks).